Reading from the N-terminus, the 131-residue chain is Small ribosomal subunit protein uS8 (131 aa).

It belongs to the universal ribosomal protein uS8 family. In terms of assembly, part of the 30S ribosomal subunit. Contacts proteins S5 and S12.

Functionally, one of the primary rRNA binding proteins, it binds directly to 16S rRNA central domain where it helps coordinate assembly of the platform of the 30S subunit. The polypeptide is Small ribosomal subunit protein uS8 (Janthinobacterium sp. (strain Marseille) (Minibacterium massiliensis)).